We begin with the raw amino-acid sequence, 464 residues long: Juvenile hormone epoxide hydrolase 1 (464 aa).

Residues 7 to 27 (MLIFAAIAGIAVLYYQITKEL) form a helical membrane-spanning segment. The Nucleophile role is filled by Asp224. The Proton donor role is filled by Tyr370. Residue His427 is the Proton acceptor of the active site.

It belongs to the peptidase S33 family. Developing oocytes, fat body and midgut epithelium of adults.

It is found in the microsome membrane. It localises to the endoplasmic reticulum membrane. It carries out the reaction cis-stilbene oxide + H2O = (1R,2R)-hydrobenzoin. The catalysed reaction is 1-(4-methoxyphenyl)-N-methyl-N-[(3-methyloxetan-3-yl)methyl]methanamine + H2O = 2-{[(4-methoxybenzyl)(methyl)amino]methyl}-2-methylpropane-1,3-diol. Its function is as follows. Catalyzes juvenile hormone hydrolysis. This is Juvenile hormone epoxide hydrolase 1 from Ctenocephalides felis (Cat flea).